Here is a 400-residue protein sequence, read N- to C-terminus: Pyruvate dehydrogenase E1 component subunit beta-4, chloroplastic (400 aa).

Residues 1–34 (MAAASSLHAAPRVGSSSSFSSSSSAGRRSASAAR) are disordered. The transit peptide at 1–57 (MAAASSLHAAPRVGSSSSFSSSSSAGRRSASAARSVRVAAAAGSCAARRAGGRMVAR) directs the protein to the chloroplast. The span at 9 to 34 (AAPRVGSSSSFSSSSSAGRRSASAAR) shows a compositional bias: low complexity. Glu-136 serves as a coordination point for thiamine diphosphate. Residues Ile-189, Ala-237, Ile-238, and Asn-242 each contribute to the K(+) site.

In terms of assembly, tetramer of 2 alpha and 2 beta subunits. The cofactor is thiamine diphosphate.

It is found in the plastid. The protein localises to the chloroplast. The enzyme catalyses N(6)-[(R)-lipoyl]-L-lysyl-[protein] + pyruvate + H(+) = N(6)-[(R)-S(8)-acetyldihydrolipoyl]-L-lysyl-[protein] + CO2. In terms of biological role, the pyruvate dehydrogenase complex catalyzes the overall conversion of pyruvate to acetyl-CoA and CO(2). It contains multiple copies of three enzymatic components: pyruvate dehydrogenase (E1), dihydrolipoamide acetyltransferase (E2) and lipoamide dehydrogenase (E3). In Oryza sativa subsp. japonica (Rice), this protein is Pyruvate dehydrogenase E1 component subunit beta-4, chloroplastic.